Here is a 202-residue protein sequence, read N- to C-terminus: Protein DEHYDRATION-INDUCED 19 homolog 5 (202 aa).

The segment covering 88–97 (SHLLKRRKPS) has biased composition (basic residues). The disordered stretch occupies residues 88–120 (SHLLKRRKPSRPSSSWPTPSNNSDPYFEGPPQY). Low complexity predominate over residues 98 to 112 (RPSSSWPTPSNNSDP).

This sequence belongs to the Di19 family.

This is Protein DEHYDRATION-INDUCED 19 homolog 5 (DI19-5) from Oryza sativa subsp. japonica (Rice).